The chain runs to 247 residues: Triosephosphate isomerase (247 aa).

Substrate contacts are provided by Asn-10 and Lys-12. The active-site Electrophile is the His-94. Catalysis depends on Glu-164, which acts as the Proton acceptor.

This sequence belongs to the triosephosphate isomerase family. As to quaternary structure, homodimer.

The catalysed reaction is D-glyceraldehyde 3-phosphate = dihydroxyacetone phosphate. It functions in the pathway carbohydrate biosynthesis; gluconeogenesis. It participates in carbohydrate degradation; glycolysis; D-glyceraldehyde 3-phosphate from glycerone phosphate: step 1/1. The sequence is that of Triosephosphate isomerase (Tpi) from Drosophila melanogaster (Fruit fly).